Reading from the N-terminus, the 96-residue chain is MIPATRSLLCAALLLLATSRLATGAPIANELRCQCLQTMAGIHLKNIQSLKVLPSGPHCTQTEVIATLKNGREACLDPEAPLVQKIVQKMLKGVPK.

The signal sequence occupies residues 1–24 (MIPATRSLLCAALLLLATSRLATG). 2 disulfides stabilise this stretch: Cys33-Cys59 and Cys35-Cys75.

The protein belongs to the intercrine alpha (chemokine CxC) family. Post-translationally, the N-terminal processed form KC(5-72) is produced by proteolytic cleavage after secretion from bone marrow stromal cells.

The protein resides in the secreted. Its function is as follows. Has chemotactic activity for neutrophils. Contributes to neutrophil activation during inflammation. Hematoregulatory chemokine, which, in vitro, suppresses hematopoietic progenitor cell proliferation. KC(5-72) shows a highly enhanced hematopoietic activity. In Mus musculus (Mouse), this protein is Growth-regulated alpha protein (Cxcl1).